The chain runs to 154 residues: 3-hydroxyacyl-[acyl-carrier-protein] dehydratase FabZ (154 aa).

H54 is an active-site residue.

It belongs to the thioester dehydratase family. FabZ subfamily.

The protein resides in the cytoplasm. It carries out the reaction a (3R)-hydroxyacyl-[ACP] = a (2E)-enoyl-[ACP] + H2O. In terms of biological role, involved in unsaturated fatty acids biosynthesis. Catalyzes the dehydration of short chain beta-hydroxyacyl-ACPs and long chain saturated and unsaturated beta-hydroxyacyl-ACPs. This chain is 3-hydroxyacyl-[acyl-carrier-protein] dehydratase FabZ, found in Shewanella oneidensis (strain ATCC 700550 / JCM 31522 / CIP 106686 / LMG 19005 / NCIMB 14063 / MR-1).